The primary structure comprises 429 residues: Adenylosuccinate synthetase (429 aa).

Residues 12–18 (GDEGKGK) and 40–42 (GHT) each bind GTP. Aspartate 13 functions as the Proton acceptor in the catalytic mechanism. Aspartate 13 and glycine 40 together coordinate Mg(2+). IMP-binding positions include 13–16 (DEGK), 38–41 (NAGH), threonine 129, arginine 143, glutamine 223, threonine 238, and arginine 302. The active-site Proton donor is the histidine 41. A substrate-binding site is contributed by 298-304 (VVTGRKR). GTP is bound by residues arginine 304, 330 to 332 (KLD), and 412 to 414 (STS).

It belongs to the adenylosuccinate synthetase family. Homodimer. Requires Mg(2+) as cofactor.

The protein resides in the cytoplasm. The enzyme catalyses IMP + L-aspartate + GTP = N(6)-(1,2-dicarboxyethyl)-AMP + GDP + phosphate + 2 H(+). It participates in purine metabolism; AMP biosynthesis via de novo pathway; AMP from IMP: step 1/2. Plays an important role in the de novo pathway of purine nucleotide biosynthesis. Catalyzes the first committed step in the biosynthesis of AMP from IMP. In Brucella ovis (strain ATCC 25840 / 63/290 / NCTC 10512), this protein is Adenylosuccinate synthetase.